Here is a 349-residue protein sequence, read N- to C-terminus: Micronemal protein 6 (349 aa).

An N-terminal signal peptide occupies residues 1 to 23 (MRLFRCCAAAVVAAESLLWLKNG). EGF-like domains follow at residues 36 to 80 (IADN…VTCM), 96 to 134 (TPAACSSNPCGPEAAGTCKETNSGYICRCNQGYRISLDG), and 147 to 192 (GCEE…ITCK). 9 disulfide bridges follow: cysteine 40–cysteine 53, cysteine 45–cysteine 62, cysteine 64–cysteine 79, cysteine 100–cysteine 113, cysteine 105–cysteine 122, cysteine 124–cysteine 140, cysteine 148–cysteine 162, cysteine 153–cysteine 173, and cysteine 175–cysteine 191. Positions 194-291 (VPPHYRKPPF…EEGSGHAGAI (98 aa)) are disordered. Positions 204 to 283 (EFGKGGHPVD…SEEQGKEREE (80 aa)) are acidic domain. Basic and acidic residues-rich tracts occupy residues 210–247 (HPVDSEPSKRQREDEGESREPESDSTEPGRDQERRTPL) and 276–285 (EQGKEREEGS). A helical transmembrane segment spans residues 290-310 (AIAGGVIGGLLLLSAAGAGVA).

In terms of assembly, interacts directly with MIC1. Part of the MIC6-MIC1-MIC4 complex. Post-translationally, subject to proteolytic processing involving both the N-terminus and the C-terminus. The first EGF-like domain (EGF-like domain 1) is removed by proteolytic cleavage by ASP3 and is not present in the mature protein. Released as soluble 35 kDa protein after proteolytic processing at the C-terminus.

The protein resides in the cytoplasmic vesicle. The protein localises to the secretory vesicle. It is found in the microneme membrane. It localises to the secreted. Functionally, escorter protein required for import of MIC1 and MIC4 adhesins into the microneme. This Toxoplasma gondii protein is Micronemal protein 6.